Reading from the N-terminus, the 334-residue chain is Ornithine carbamoyltransferase (334 aa).

Carbamoyl phosphate is bound by residues Ser56–Thr59, Gln83, Arg107, and His134–Gln137. L-ornithine contacts are provided by residues Asn168, Asp232, and Ser236–Met237. Residues Cys274–Leu275 and Arg320 each bind carbamoyl phosphate.

This sequence belongs to the aspartate/ornithine carbamoyltransferase superfamily. OTCase family.

The protein localises to the cytoplasm. It carries out the reaction carbamoyl phosphate + L-ornithine = L-citrulline + phosphate + H(+). The protein operates within amino-acid biosynthesis; L-arginine biosynthesis; L-arginine from L-ornithine and carbamoyl phosphate: step 1/3. Its function is as follows. Reversibly catalyzes the transfer of the carbamoyl group from carbamoyl phosphate (CP) to the N(epsilon) atom of ornithine (ORN) to produce L-citrulline. In Shigella dysenteriae serotype 1 (strain Sd197), this protein is Ornithine carbamoyltransferase.